The primary structure comprises 380 residues: Erythronate-4-phosphate dehydrogenase (380 aa).

Substrate-binding residues include serine 45 and threonine 66. Residues 126–127 (QV), aspartate 146, threonine 174, 205–207 (ASR), and aspartate 231 contribute to the NAD(+) site. Arginine 207 is a catalytic residue. Glutamate 236 is a catalytic residue. Histidine 253 (proton donor) is an active-site residue. Residue glycine 256 coordinates NAD(+). Tyrosine 257 provides a ligand contact to substrate.

This sequence belongs to the D-isomer specific 2-hydroxyacid dehydrogenase family. PdxB subfamily. As to quaternary structure, homodimer.

The protein localises to the cytoplasm. The catalysed reaction is 4-phospho-D-erythronate + NAD(+) = (R)-3-hydroxy-2-oxo-4-phosphooxybutanoate + NADH + H(+). It functions in the pathway cofactor biosynthesis; pyridoxine 5'-phosphate biosynthesis; pyridoxine 5'-phosphate from D-erythrose 4-phosphate: step 2/5. In terms of biological role, catalyzes the oxidation of erythronate-4-phosphate to 3-hydroxy-2-oxo-4-phosphonooxybutanoate. The chain is Erythronate-4-phosphate dehydrogenase from Azotobacter vinelandii (strain DJ / ATCC BAA-1303).